Here is a 231-residue protein sequence, read N- to C-terminus: Large ribosomal subunit protein uL1 (231 aa).

It belongs to the universal ribosomal protein uL1 family. Part of the 50S ribosomal subunit.

In terms of biological role, binds directly to 23S rRNA. The L1 stalk is quite mobile in the ribosome, and is involved in E site tRNA release. Protein L1 is also a translational repressor protein, it controls the translation of the L11 operon by binding to its mRNA. This chain is Large ribosomal subunit protein uL1, found in Buchnera aphidicola subsp. Acyrthosiphon pisum (strain 5A).